Consider the following 127-residue polypeptide: Translation initiation factor 5A (127 aa).

The residue at position 35 (lysine 35) is a Hypusine.

This sequence belongs to the eIF-5A family.

It localises to the cytoplasm. Its function is as follows. Functions by promoting the formation of the first peptide bond. This chain is Translation initiation factor 5A, found in Methanospirillum hungatei JF-1 (strain ATCC 27890 / DSM 864 / NBRC 100397 / JF-1).